A 359-amino-acid polypeptide reads, in one-letter code: Photosystem II protein D1 1 (359 aa).

Transmembrane regions (helical) follow at residues 29–46 (YVGW…AATT), 118–133 (HFLI…EWEL), and 142–156 (WICV…AASA). A chlorophyll a-binding site is contributed by H118. Y126 contributes to the pheophytin a binding site. D170 and E189 together coordinate [CaMn4O5] cluster. The chain crosses the membrane as a helical span at residues 197–218 (FHMMGVAGVFGGSLFSAMHGSL). H198 lines the chlorophyll a pocket. Residues H215 and 264 to 265 (SF) each bind a quinone. H215 is a Fe cation binding site. H272 is a Fe cation binding site. The chain crosses the membrane as a helical span at residues 274 to 288 (FLAAWPVVGIWFTAL). Positions 332, 333, 342, and 344 each coordinate [CaMn4O5] cluster. Positions 345–359 (AAESTPVALQAPAIG) are excised as a propeptide.

It belongs to the reaction center PufL/M/PsbA/D family. As to quaternary structure, PSII is composed of 1 copy each of membrane proteins PsbA, PsbB, PsbC, PsbD, PsbE, PsbF, PsbH, PsbI, PsbJ, PsbK, PsbL, PsbM, PsbT, PsbX, PsbY, PsbZ, Psb30/Ycf12, peripheral proteins PsbO, CyanoQ (PsbQ), PsbU, PsbV and a large number of cofactors. It forms dimeric complexes. The D1/D2 heterodimer binds P680, chlorophylls that are the primary electron donor of PSII, and subsequent electron acceptors. It shares a non-heme iron and each subunit binds pheophytin, quinone, additional chlorophylls, carotenoids and lipids. D1 provides most of the ligands for the Mn4-Ca-O5 cluster of the oxygen-evolving complex (OEC). There is also a Cl(-1) ion associated with D1 and D2, which is required for oxygen evolution. The PSII complex binds additional chlorophylls, carotenoids and specific lipids. is required as a cofactor. In terms of processing, tyr-161 forms a radical intermediate that is referred to as redox-active TyrZ, YZ or Y-Z. Post-translationally, C-terminally processed by CtpA; processing is essential to allow assembly of the oxygen-evolving complex and thus photosynthetic growth.

It localises to the cellular thylakoid membrane. The enzyme catalyses 2 a plastoquinone + 4 hnu + 2 H2O = 2 a plastoquinol + O2. Its function is as follows. Photosystem II (PSII) is a light-driven water:plastoquinone oxidoreductase that uses light energy to abstract electrons from H(2)O, generating O(2) and a proton gradient subsequently used for ATP formation. It consists of a core antenna complex that captures photons, and an electron transfer chain that converts photonic excitation into a charge separation. The D1/D2 (PsbA/PsbD) reaction center heterodimer binds P680, the primary electron donor of PSII as well as several subsequent electron acceptors. The sequence is that of Photosystem II protein D1 1 from Synechococcus sp. (strain WH7803).